A 525-amino-acid polypeptide reads, in one-letter code: Ribosomal protein uS12 methylthiotransferase RimO (525 aa).

Positions 1–20 (MPKISTESVNTTIAPSQPAS) are enriched in polar residues. A disordered region spans residues 1 to 44 (MPKISTESVNTTIAPSQPASTAPKDTATLFNPAKPTATPAQSSI). The region spanning 82–192 (PKIGFVSLGC…VIRAVALHVP (111 aa)) is the MTTase N-terminal domain. [4Fe-4S] cluster-binding residues include C91, C127, C156, C230, C234, and C237. Positions 216–453 (LTPSHYAYLK…MTLQQDISAQ (238 aa)) constitute a Radical SAM core domain. In terms of domain architecture, TRAM spans 456–525 (QEKIGKTLMV…EYDLFASYQA (70 aa)).

Belongs to the methylthiotransferase family. RimO subfamily. Requires [4Fe-4S] cluster as cofactor.

It is found in the cytoplasm. The catalysed reaction is L-aspartate(89)-[ribosomal protein uS12]-hydrogen + (sulfur carrier)-SH + AH2 + 2 S-adenosyl-L-methionine = 3-methylsulfanyl-L-aspartate(89)-[ribosomal protein uS12]-hydrogen + (sulfur carrier)-H + 5'-deoxyadenosine + L-methionine + A + S-adenosyl-L-homocysteine + 2 H(+). Its function is as follows. Catalyzes the methylthiolation of an aspartic acid residue of ribosomal protein uS12. In Psychrobacter arcticus (strain DSM 17307 / VKM B-2377 / 273-4), this protein is Ribosomal protein uS12 methylthiotransferase RimO.